The chain runs to 940 residues: Phosphoenolpyruvate carboxylase (940 aa).

Residues H138 and K603 contribute to the active site.

It belongs to the PEPCase type 1 family. Mg(2+) is required as a cofactor.

It catalyses the reaction oxaloacetate + phosphate = phosphoenolpyruvate + hydrogencarbonate. Forms oxaloacetate, a four-carbon dicarboxylic acid source for the tricarboxylic acid cycle. This is Phosphoenolpyruvate carboxylase from Streptococcus thermophilus (strain ATCC BAA-250 / LMG 18311).